The sequence spans 400 residues: Tryptophan 2,3-dioxygenase (400 aa).

Substrate is bound by residues 75-79 and arginine 146; that span reads FIIIH. Histidine 332 contacts heme. Threonine 346 is a binding site for substrate.

It belongs to the tryptophan 2,3-dioxygenase family. In terms of assembly, homotetramer. Dimer of dimers. Requires heme as cofactor.

The catalysed reaction is L-tryptophan + O2 = N-formyl-L-kynurenine. The protein operates within amino-acid degradation; L-tryptophan degradation via kynurenine pathway; L-kynurenine from L-tryptophan: step 1/2. Heme-dependent dioxygenase that catalyzes the oxidative cleavage of the L-tryptophan (L-Trp) pyrrole ring and converts L-tryptophan to N-formyl-L-kynurenine. Catalyzes the oxidative cleavage of the indole moiety. This chain is Tryptophan 2,3-dioxygenase, found in Dictyostelium discoideum (Social amoeba).